The primary structure comprises 1405 residues: DNA-directed RNA polymerase subunit beta' (1405 aa).

Cys-71, Cys-73, Cys-86, and Cys-89 together coordinate Zn(2+). Asp-462, Asp-464, and Asp-466 together coordinate Mg(2+). Positions 820, 893, 900, and 903 each coordinate Zn(2+).

The protein belongs to the RNA polymerase beta' chain family. The RNAP catalytic core consists of 2 alpha, 1 beta, 1 beta' and 1 omega subunit. When a sigma factor is associated with the core the holoenzyme is formed, which can initiate transcription. Mg(2+) serves as cofactor. It depends on Zn(2+) as a cofactor.

It catalyses the reaction RNA(n) + a ribonucleoside 5'-triphosphate = RNA(n+1) + diphosphate. Its function is as follows. DNA-dependent RNA polymerase catalyzes the transcription of DNA into RNA using the four ribonucleoside triphosphates as substrates. This is DNA-directed RNA polymerase subunit beta' from Methylorubrum populi (strain ATCC BAA-705 / NCIMB 13946 / BJ001) (Methylobacterium populi).